The chain runs to 251 residues: UDP-N-acetylglucosamine--dolichyl-phosphate N-acetylglucosaminyltransferase (251 aa).

Residues 150–167 form a helical membrane-spanning segment; that stretch reads VGNLGLSFITFLLGGYYV.

The protein belongs to the glycosyltransferase 2 family.

It is found in the cell membrane. It catalyses the reaction a di-trans,poly-cis-dolichyl phosphate + UDP-N-acetyl-alpha-D-glucosamine = an N-acetyl-alpha-D-glucosaminyl-phospho-di-trans,poly-cis-dolichol + UDP. It participates in cell surface structure biogenesis; S-layer biogenesis. Its pathway is protein modification; protein glycosylation. In terms of biological role, involved in the assembly of an N-linked disaccharide that decorates the S-layer glycoprotein and flagellins. AglK initiates N-linked glycosylation through the formation of alpha-linked dolichyl monophosphate N-acetylglucosamine. It catalyzes the transfer of GlcNAc from the donor substrate UDP-GlcNAc to dolichyl phosphate C55 (Dol-P) to yield Dol-P-GlcNAc. AglK reaction proceeds with retention of stereochemistry. The reaction is specific for UDP-GlcNAc. AglK shows a stronger preference for short dolichol (C55-60 Dol-P) substrates compared with the longer (C85-105 Dol-P). The protein is UDP-N-acetylglucosamine--dolichyl-phosphate N-acetylglucosaminyltransferase of Methanococcus voltae.